The sequence spans 464 residues: Tryprostatin B synthase (464 aa).

The brevianamide F site is built by Met94 and Glu102. Dimethylallyl diphosphate contacts are provided by Arg113, Lys201, and Tyr203. Tyr205 is a binding site for brevianamide F. Residues Lys294, Tyr296, Gln380, Tyr382, Tyr446, and Tyr450 each coordinate dimethylallyl diphosphate.

It belongs to the tryptophan dimethylallyltransferase family.

It carries out the reaction brevianamide F + dimethylallyl diphosphate = tryprostatin B + diphosphate. The protein operates within mycotoxin biosynthesis. In terms of biological role, brevianamide F prenyltransferase; part of the gene cluster that mediates the biosynthesis of fumitremorgins, indole alkaloids that carry not only intriguing chemical structures, but also interesting biological and pharmacological activities. The biosynthesis of fumitremorgin-type alkaloids begins by condensation of the two amino acids L-tryptophan and L-proline to brevianamide F, catalyzed by the non-ribosomal peptide synthetase ftmA. Brevianamide F is then prenylated by the prenyltransferase ftmPT1/ftmB in the presence of dimethylallyl diphosphate, resulting in the formation of tryprostatin B. The three cytochrome P450 monooxygenases, ftmP450-1/ftmC, ftmP450-2/ftmE and ftmP450-3/FtmG, are responsible for the conversion of tryprostatin B to 6-hydroxytryprostatin B, tryprostatin A to fumitremorgin C and fumitremorgin C to 12,13-dihydroxyfumitremorgin C, respectively. The putative methyltransferase ftmMT/ftmD is expected for the conversion of 6-hydroxytryprostatin B to tryprostatin A. FtmPT2/FtmH catalyzes the prenylation of 12,13-dihydroxyfumitre-morgin C in the presence of dimethylallyl diphosphate, resulting in the formation of fumitremorgin B. Fumitremorgin B is further converted to verruculogen by ftmOx1/ftmF via the insertion of an endoperoxide bond between the two prenyl moieties. In some fungal species, verruculogen is further converted to fumitremorgin A, but the enzymes involved in this step have not been identified yet. The protein is Tryprostatin B synthase of Aspergillus fumigatus (Neosartorya fumigata).